The chain runs to 372 residues: Cytoplasmic envelopment protein 2 (372 aa).

The interval 1-38 is disordered; it reads MAQRALWRPQATPGPPGAAAPPGHRGAPPDARAPDPGP. The span at 20-30 shows a compositional bias: low complexity; the sequence is APPGHRGAPPD.

This sequence belongs to the herpesviridae cytoplasmic envelopment protein 2 family. Interacts with cytoplasmic envelopment protein 3 and with the capsid.

The protein localises to the virion tegument. The protein resides in the host cytoplasm. It is found in the host nucleus. Its function is as follows. Plays a critical role in cytoplasmic virus egress. Participates in the final step of tegumentation and envelope acquisition within the host cytoplasm by directly interacting with the capsid. Upon virion binding to target cell, a signaling cascade is triggered to disrupt the interaction with the capsid, thereby preparing capsid uncoating. In Human herpesvirus 2 (strain HG52) (HHV-2), this protein is Cytoplasmic envelopment protein 2 (UL16).